The primary structure comprises 157 residues: Phosphopantetheine adenylyltransferase (157 aa).

Residue Ser9 participates in substrate binding. Residues 9-10 (SF) and His17 each bind ATP. Substrate-binding residues include Lys41, Thr73, and Arg87. ATP contacts are provided by residues 88–90 (GIR), Glu98, and 122–128 (YQDISSS).

The protein belongs to the bacterial CoaD family. As to quaternary structure, homohexamer. Mg(2+) serves as cofactor.

It is found in the cytoplasm. The enzyme catalyses (R)-4'-phosphopantetheine + ATP + H(+) = 3'-dephospho-CoA + diphosphate. Its pathway is cofactor biosynthesis; coenzyme A biosynthesis; CoA from (R)-pantothenate: step 4/5. In terms of biological role, reversibly transfers an adenylyl group from ATP to 4'-phosphopantetheine, yielding dephospho-CoA (dPCoA) and pyrophosphate. In Oenococcus oeni (strain ATCC BAA-331 / PSU-1), this protein is Phosphopantetheine adenylyltransferase.